A 298-amino-acid chain; its full sequence is Acetylglutamate kinase (298 aa).

Substrate is bound by residues 69 to 70 (GG), Arg-91, and Asn-191.

Belongs to the acetylglutamate kinase family. ArgB subfamily.

The protein resides in the cytoplasm. The catalysed reaction is N-acetyl-L-glutamate + ATP = N-acetyl-L-glutamyl 5-phosphate + ADP. It participates in amino-acid biosynthesis; L-arginine biosynthesis; N(2)-acetyl-L-ornithine from L-glutamate: step 2/4. Catalyzes the ATP-dependent phosphorylation of N-acetyl-L-glutamate. This is Acetylglutamate kinase from Neisseria meningitidis serogroup C / serotype 2a (strain ATCC 700532 / DSM 15464 / FAM18).